Here is a 72-residue protein sequence, read N- to C-terminus: Cytochrome c oxidase subunit 2 (72 aa).

Topologically, residues 1–14 are mitochondrial intermembrane; it reads MAHPSQLGFQDAAS. The chain crosses the membrane as a helical span at residues 15–45; it reads PVMEELLHFHDHALMIVFLISTLVLYIIVAM. At 46–72 the chain is on the mitochondrial matrix side; the sequence is VSTKLTNKYXLDSQEIEVIWTXLPAVI.

The protein belongs to the cytochrome c oxidase subunit 2 family. As to quaternary structure, component of the cytochrome c oxidase (complex IV, CIV), a multisubunit enzyme composed of 14 subunits. The complex is composed of a catalytic core of 3 subunits MT-CO1, MT-CO2 and MT-CO3, encoded in the mitochondrial DNA, and 11 supernumerary subunits COX4I, COX5A, COX5B, COX6A, COX6B, COX6C, COX7A, COX7B, COX7C, COX8 and NDUFA4, which are encoded in the nuclear genome. The complex exists as a monomer or a dimer and forms supercomplexes (SCs) in the inner mitochondrial membrane with NADH-ubiquinone oxidoreductase (complex I, CI) and ubiquinol-cytochrome c oxidoreductase (cytochrome b-c1 complex, complex III, CIII), resulting in different assemblies (supercomplex SCI(1)III(2)IV(1) and megacomplex MCI(2)III(2)IV(2)). Found in a complex with TMEM177, COA6, COX18, COX20, SCO1 and SCO2. Interacts with TMEM177 in a COX20-dependent manner. Interacts with COX20. Interacts with COX16. Cu cation serves as cofactor.

The protein localises to the mitochondrion inner membrane. It carries out the reaction 4 Fe(II)-[cytochrome c] + O2 + 8 H(+)(in) = 4 Fe(III)-[cytochrome c] + 2 H2O + 4 H(+)(out). Component of the cytochrome c oxidase, the last enzyme in the mitochondrial electron transport chain which drives oxidative phosphorylation. The respiratory chain contains 3 multisubunit complexes succinate dehydrogenase (complex II, CII), ubiquinol-cytochrome c oxidoreductase (cytochrome b-c1 complex, complex III, CIII) and cytochrome c oxidase (complex IV, CIV), that cooperate to transfer electrons derived from NADH and succinate to molecular oxygen, creating an electrochemical gradient over the inner membrane that drives transmembrane transport and the ATP synthase. Cytochrome c oxidase is the component of the respiratory chain that catalyzes the reduction of oxygen to water. Electrons originating from reduced cytochrome c in the intermembrane space (IMS) are transferred via the dinuclear copper A center (CU(A)) of subunit 2 and heme A of subunit 1 to the active site in subunit 1, a binuclear center (BNC) formed by heme A3 and copper B (CU(B)). The BNC reduces molecular oxygen to 2 water molecules using 4 electrons from cytochrome c in the IMS and 4 protons from the mitochondrial matrix. The polypeptide is Cytochrome c oxidase subunit 2 (mt-co2) (Gomphosus varius (Bird wrasse)).